A 244-amino-acid chain; its full sequence is NAD-dependent protein deacetylase (244 aa).

Positions 1 to 244 (MDDKINKLKE…IGKVLGKVID (244 aa)) constitute a Deacetylase sirtuin-type domain. Residues A24, T28, F35, R36, Q105, I107, D108, and H123 each contribute to the NAD(+) site. Residue F35 coordinates nicotinamide. Nicotinamide contacts are provided by I107 and D108. The Proton acceptor role is filled by H123. Residues C131, C134, C152, and C155 each contribute to the Zn(2+) site. NAD(+) is bound by residues T193, S194, N217, and I235.

Belongs to the sirtuin family. Class U subfamily. Zn(2+) serves as cofactor.

Its subcellular location is the cytoplasm. The catalysed reaction is N(6)-acetyl-L-lysyl-[protein] + NAD(+) + H2O = 2''-O-acetyl-ADP-D-ribose + nicotinamide + L-lysyl-[protein]. In terms of biological role, NAD-dependent protein deacetylase which modulates the activities of several enzymes which are inactive in their acetylated form. This is NAD-dependent protein deacetylase from Clostridium perfringens (strain 13 / Type A).